The following is an 83-amino-acid chain: Putative cytochrome b5 B11H24.095 (83 aa).

The region spanning 2 to 78 is the Cytochrome b5 heme-binding domain; that stretch reads SQTFTKSQVA…GTKLKVGTLA (77 aa). 2 residues coordinate heme: His37 and His60.

This sequence belongs to the cytochrome b5 family.

The sequence is that of Putative cytochrome b5 B11H24.095 from Neurospora crassa (strain ATCC 24698 / 74-OR23-1A / CBS 708.71 / DSM 1257 / FGSC 987).